Here is a 227-residue protein sequence, read N- to C-terminus: ATP synthase F(0) complex subunit a (227 aa).

Helical transmembrane passes span 13 to 33, 69 to 89, 98 to 118, 132 to 152, 179 to 199, and 202 to 222; these read YLLG…LFPA, WALL…LGLL, QLSL…IIGM, EGTP…SLFI, VFVL…VLFL, and LLEV…LSLY.

This sequence belongs to the ATPase A chain family. Component of the ATP synthase complex composed at least of ATP5F1A/subunit alpha, ATP5F1B/subunit beta, ATP5MC1/subunit c (homooctomer), MT-ATP6/subunit a, MT-ATP8/subunit 8, ATP5ME/subunit e, ATP5MF/subunit f, ATP5MG/subunit g, ATP5MK/subunit k, ATP5MJ/subunit j, ATP5F1C/subunit gamma, ATP5F1D/subunit delta, ATP5F1E/subunit epsilon, ATP5PF/subunit F6, ATP5PB/subunit b, ATP5PD/subunit d, ATP5PO/subunit OSCP. ATP synthase complex consists of a soluble F(1) head domain (subunits alpha(3) and beta(3)) - the catalytic core - and a membrane F(0) domain - the membrane proton channel (subunits c, a, 8, e, f, g, k and j). These two domains are linked by a central stalk (subunits gamma, delta, and epsilon) rotating inside the F1 region and a stationary peripheral stalk (subunits F6, b, d, and OSCP). Interacts with DNAJC30; interaction is direct.

Its subcellular location is the mitochondrion inner membrane. It carries out the reaction H(+)(in) = H(+)(out). Its function is as follows. Subunit a, of the mitochondrial membrane ATP synthase complex (F(1)F(0) ATP synthase or Complex V) that produces ATP from ADP in the presence of a proton gradient across the membrane which is generated by electron transport complexes of the respiratory chain. ATP synthase complex consist of a soluble F(1) head domain - the catalytic core - and a membrane F(1) domain - the membrane proton channel. These two domains are linked by a central stalk rotating inside the F(1) region and a stationary peripheral stalk. During catalysis, ATP synthesis in the catalytic domain of F(1) is coupled via a rotary mechanism of the central stalk subunits to proton translocation. With the subunit c (ATP5MC1), forms the proton-conducting channel in the F(0) domain, that contains two crucial half-channels (inlet and outlet) that facilitate proton movement from the mitochondrial intermembrane space (IMS) into the matrix. Protons are taken up via the inlet half-channel and released through the outlet half-channel, following a Grotthuss mechanism. This chain is ATP synthase F(0) complex subunit a, found in Danio rerio (Zebrafish).